Reading from the N-terminus, the 813-residue chain is Xaa-Pro dipeptidyl-peptidase (813 aa).

Catalysis depends on charge relay system residues serine 375, aspartate 495, and histidine 526.

Belongs to the peptidase S15 family. As to quaternary structure, homodimer.

It is found in the cytoplasm. It carries out the reaction Hydrolyzes Xaa-Pro-|- bonds to release unblocked, N-terminal dipeptides from substrates including Ala-Pro-|-p-nitroanilide and (sequentially) Tyr-Pro-|-Phe-Pro-|-Gly-Pro-|-Ile.. Its function is as follows. Removes N-terminal dipeptides sequentially from polypeptides having unsubstituted N-termini provided that the penultimate residue is proline. In Lactiplantibacillus plantarum (strain ATCC BAA-793 / NCIMB 8826 / WCFS1) (Lactobacillus plantarum), this protein is Xaa-Pro dipeptidyl-peptidase.